A 265-amino-acid polypeptide reads, in one-letter code: Glutamate racemase (265 aa).

Substrate-binding positions include 12 to 13 (DS) and 44 to 45 (YG). The active-site Proton donor/acceptor is the Cys75. 76-77 (NT) lines the substrate pocket. Cys186 acts as the Proton donor/acceptor in catalysis. 187–188 (TH) contributes to the substrate binding site.

The protein belongs to the aspartate/glutamate racemases family.

The catalysed reaction is L-glutamate = D-glutamate. The protein operates within cell wall biogenesis; peptidoglycan biosynthesis. Provides the (R)-glutamate required for cell wall biosynthesis. The protein is Glutamate racemase of Pseudomonas aeruginosa (strain UCBPP-PA14).